Consider the following 41-residue polypeptide: Photosystem I reaction center subunit VIII (41 aa).

The chain crosses the membrane as a helical span at residues 12–32 (WIMIPVTCWLFPVVVMGLLFI).

The protein belongs to the PsaI family.

It localises to the cellular thylakoid membrane. In terms of biological role, may help in the organization of the PsaL subunit. This chain is Photosystem I reaction center subunit VIII, found in Cyanothece sp. (strain PCC 7425 / ATCC 29141).